Reading from the N-terminus, the 327-residue chain is Beta-ketoacyl-[acyl-carrier-protein] synthase III (327 aa).

Active-site residues include cysteine 114 and histidine 254. The tract at residues 255–259 (QANRR) is ACP-binding. The active site involves asparagine 284.

It belongs to the thiolase-like superfamily. FabH family. As to quaternary structure, homodimer.

The protein localises to the cytoplasm. It carries out the reaction malonyl-[ACP] + acetyl-CoA + H(+) = 3-oxobutanoyl-[ACP] + CO2 + CoA. Its pathway is lipid metabolism; fatty acid biosynthesis. Functionally, catalyzes the condensation reaction of fatty acid synthesis by the addition to an acyl acceptor of two carbons from malonyl-ACP. Catalyzes the first condensation reaction which initiates fatty acid synthesis and may therefore play a role in governing the total rate of fatty acid production. Possesses both acetoacetyl-ACP synthase and acetyl transacylase activities. Its substrate specificity determines the biosynthesis of branched-chain and/or straight-chain of fatty acids. The chain is Beta-ketoacyl-[acyl-carrier-protein] synthase III from Lactobacillus helveticus (strain DPC 4571).